We begin with the raw amino-acid sequence, 339 residues long: Glycerol-3-phosphate dehydrogenase [NAD(P)+] (339 aa).

NADPH-binding residues include S15, Y16, H36, and K110. Sn-glycerol 3-phosphate-binding residues include K110, G139, and T141. Residue A143 coordinates NADPH. Sn-glycerol 3-phosphate is bound by residues K195, D248, S258, R259, and N260. The active-site Proton acceptor is the K195. R259 serves as a coordination point for NADPH. NADPH is bound by residues V283 and E285.

It belongs to the NAD-dependent glycerol-3-phosphate dehydrogenase family.

It is found in the cytoplasm. It catalyses the reaction sn-glycerol 3-phosphate + NAD(+) = dihydroxyacetone phosphate + NADH + H(+). It carries out the reaction sn-glycerol 3-phosphate + NADP(+) = dihydroxyacetone phosphate + NADPH + H(+). The protein operates within membrane lipid metabolism; glycerophospholipid metabolism. Catalyzes the reduction of the glycolytic intermediate dihydroxyacetone phosphate (DHAP) to sn-glycerol 3-phosphate (G3P), the key precursor for phospholipid synthesis. The protein is Glycerol-3-phosphate dehydrogenase [NAD(P)+] of Escherichia coli O17:K52:H18 (strain UMN026 / ExPEC).